Reading from the N-terminus, the 118-residue chain is uncharacterized protein (118 aa).

3 helical membrane passes run 17–37 (IIII…FAIL), 60–80 (INYT…IMIF), and 90–110 (YIEQ…GSFW).

It is found in the membrane. This is an uncharacterized protein from Acanthamoeba polyphaga mimivirus (APMV).